Reading from the N-terminus, the 118-residue chain is Fluoride-specific ion channel FluC 1 (118 aa).

A run of 4 helical transmembrane segments spans residues 5 to 25 (FLLVGFGASLGAMLRYGISIF), 39 to 59 (FFINITGSFLLGFLVSTALGP), 61 to 81 (WQLFLGTGFMGGYTTFSTFKV), and 98 to 118 (YVGLTYLCGLIAAFIGIMLGV). Na(+) contacts are provided by glycine 71 and threonine 74.

Belongs to the fluoride channel Fluc/FEX (TC 1.A.43) family.

The protein localises to the cell membrane. The enzyme catalyses fluoride(in) = fluoride(out). Na(+) is not transported, but it plays an essential structural role and its presence is essential for fluoride channel function. Fluoride-specific ion channel. Important for reducing fluoride concentration in the cell, thus reducing its toxicity. This is Fluoride-specific ion channel FluC 1 from Listeria innocua serovar 6a (strain ATCC BAA-680 / CLIP 11262).